Consider the following 583-residue polypeptide: ATP-dependent lipid A-core flippase (583 aa).

Helical transmembrane passes span 27 to 47 (LAVAVVALIINAVSDTYMVSL), 69 to 89 (LLVFGLMFIRGISSFVSTYCL), 142 to 162 (ALVSIVREGTSIIGLLVLMFY), 165 to 185 (WQLSLVLILVAPVVAWAIGFV), and 249 to 269 (AAANPIIQMIASIAIVVVLYL). Residues 28 to 310 (AVAVVALIIN…LTNVTSQFQR (283 aa)) form the ABC transmembrane type-1 domain. The ABC transporter domain occupies 342-578 (VNVKDISFTY…DGAYAQLHRI (237 aa)). An ATP-binding site is contributed by 376-383 (GRSGSGKS).

The protein belongs to the ABC transporter superfamily. Lipid exporter (TC 3.A.1.106) family. As to quaternary structure, homodimer.

The protein localises to the cell inner membrane. The enzyme catalyses ATP + H2O + lipid A-core oligosaccharideSide 1 = ADP + phosphate + lipid A-core oligosaccharideSide 2.. Functionally, involved in lipopolysaccharide (LPS) biosynthesis. Translocates lipid A-core from the inner to the outer leaflet of the inner membrane. Transmembrane domains (TMD) form a pore in the inner membrane and the ATP-binding domain (NBD) is responsible for energy generation. The chain is ATP-dependent lipid A-core flippase from Vibrio vulnificus (strain YJ016).